A 299-amino-acid polypeptide reads, in one-letter code: Acetaldehyde dehydrogenase (299 aa).

Residue 11–14 (SGNI) participates in NAD(+) binding. Residue Cys-126 is the Acyl-thioester intermediate of the active site. NAD(+)-binding positions include 157-165 (SAGPGTRAN) and Asn-267.

The protein belongs to the acetaldehyde dehydrogenase family.

The catalysed reaction is acetaldehyde + NAD(+) + CoA = acetyl-CoA + NADH + H(+). The polypeptide is Acetaldehyde dehydrogenase (Bacillus thuringiensis (strain Al Hakam)).